The chain runs to 298 residues: FH protein interacting protein FIP2 (298 aa).

The region spanning 9–80 (SMVRLNIGGK…LRDGVIPSLS (72 aa)) is the BTB domain. Pentapeptide repeat domains are found at residues 129-165 (ERVR…FFSR), 166-203 (TNLQ…GALL), 216-255 (ACLV…NLKG), and 256-295 (AKLS…NMTG).

Interacts with FH1. As to expression, expressed in all tissues but preferentially in roots and flowers.

Its pathway is protein modification; protein ubiquitination. May act as a substrate-specific adapter of an E3 ubiquitin-protein ligase complex (CUL3-RBX1-BTB) which mediates the ubiquitination and subsequent proteasomal degradation of target proteins. The protein is FH protein interacting protein FIP2 (FIP2) of Arabidopsis thaliana (Mouse-ear cress).